Reading from the N-terminus, the 541-residue chain is Chaperonin GroEL (541 aa).

Residues 29–32, 86–90, Gly413, 476–478, and Asp492 each bind ATP; these read TLGP, DGTTT, and NAA.

The protein belongs to the chaperonin (HSP60) family. As to quaternary structure, forms a cylinder of 14 subunits composed of two heptameric rings stacked back-to-back. Interacts with the co-chaperonin GroES.

The protein resides in the cytoplasm. It carries out the reaction ATP + H2O + a folded polypeptide = ADP + phosphate + an unfolded polypeptide.. Together with its co-chaperonin GroES, plays an essential role in assisting protein folding. The GroEL-GroES system forms a nano-cage that allows encapsulation of the non-native substrate proteins and provides a physical environment optimized to promote and accelerate protein folding. In Streptococcus equi subsp. equi (strain 4047), this protein is Chaperonin GroEL.